Here is a 203-residue protein sequence, read N- to C-terminus: A-type ATP synthase subunit E (203 aa).

It belongs to the V-ATPase E subunit family. As to quaternary structure, has multiple subunits with at least A(3), B(3), C, D, E, F, H, I and proteolipid K(x).

It is found in the cell membrane. Component of the A-type ATP synthase that produces ATP from ADP in the presence of a proton gradient across the membrane. The chain is A-type ATP synthase subunit E from Desulfurococcus sp. (strain SY).